The sequence spans 477 residues: E3 ubiquitin-protein ligase TRIM17 (477 aa).

The RING-type zinc finger occupies 16 to 66; the sequence is CSICLDYFTDPVMTACGHNFCRECIQMSWEKGKVKKGKKKQKGSFPCPECR. Residues 94–135 form a B box-type zinc finger; that stretch reads QKRDLCQAHQEPLKLFCQDDQSPICVVCREAQEHRMHRVLPL. Positions 99, 102, 121, and 127 each coordinate Zn(2+). Residues 135–226 adopt a coiled-coil conformation; it reads LDEAAREYKL…KLQDSKASLD (92 aa). The B30.2/SPRY domain occupies 276-475; it reads AIKTLCRVPG…MVISTVTMWV (200 aa).

The protein belongs to the TRIM/RBCC family. Interacts (via coiled coil) with TRIM44 (via coiled coil). Interacts with TRIM28; this interaction prevents TRIM28 activity on BCL2A1. Interacts with TRIM41; this interaction prevents TRIM41 activity on ZSCAN2. Interacts with BECN1. Interacts with NFATC3 and NFATC4; these interactions prevent NFATC3 and NFATC4 nuclear localization. Auto-ubiquitinated. As to expression, almost exclusively in the testis.

Its subcellular location is the cytoplasm. The protein localises to the lysosome. It carries out the reaction S-ubiquitinyl-[E2 ubiquitin-conjugating enzyme]-L-cysteine + [acceptor protein]-L-lysine = [E2 ubiquitin-conjugating enzyme]-L-cysteine + N(6)-ubiquitinyl-[acceptor protein]-L-lysine.. It participates in protein modification; protein ubiquitination. E3 ubiquitin ligase that plays important roles in the regulation of neuronal apoptosis, selective autophagy or cell proliferation. Stimulates the degradation of kinetochore ZW10 interacting protein ZWINT in a proteasome-dependent manner, leading to negative regulation of cell proliferation. Inhibits autophagic degradation of diverse known targets while contributing to autophagy of midbodies. Autophagy-inhibitory activity involves MCL1, which TRIM17 assembles into complexes with the key autophagy regulator BECN1. Controls neuronal apoptosis by mediating ubiquitination and degradation of MCL1 to initiate neuronal death. In addition, regulates NFAT transcription factors NFATC3 and NFATC4 activities by preventing their nuclear localization, thus inhibiting their transcriptional activities. Decreases TRIM41-mediated degradation of ZSCAN2 thereby stimulating alpha-synuclein/SNCA transcription in neuronal cells. Prevents the E3 ubiquitin-ligase activity of TRIM28 and its interaction with anti-apoptotic BCL2A1, blocking TRIM28 from ubiquitinating BCL2A1. The sequence is that of E3 ubiquitin-protein ligase TRIM17 (Trim17) from Mus musculus (Mouse).